Reading from the N-terminus, the 314-residue chain is Formate-nitrite transporter (314 aa).

Residues 1–47 lie on the Cytoplasmic side of the membrane; the sequence is MSKGKSKYVIDPISVKTACTSEESYIRCVEYGKGKAHYPNLSLLAKA. Residues 48–68 traverse the membrane as a helical segment; that stretch reads ILAGVFVGVCAHASGIAGGHF. Residues 69 to 78 lie on the Extracellular side of the membrane; that stretch reads YYHKLREYVG. The chain crosses the membrane as a helical span at residues 79 to 99; sequence ISMSAFVYGFTFPIAFLCIIA. The Cytoplasmic portion of the chain corresponds to 100 to 128; that stretch reads TGSDLFTGNTLAVTTALLQRKVSLLQYLR. The helical transmembrane segment at 129–149 threads the bilayer; the sequence is VMSISLFGNYLGAVSFAFFVS. The Extracellular segment spans residues 150–185; it reads HLSGAYEKHTDVTKNHIFQFLNDIAEKKISHTFIQC. The helical transmembrane segment at 186–206 threads the bilayer; sequence ICLAIGCNIFVCLAVYFVLTI. The Cytoplasmic portion of the chain corresponds to 207–211; it reads KDGSG. The helical transmembrane segment at 212 to 232 threads the bilayer; it reads MVFSVFFAVYAFAIAGYEHII. Residues 233-257 lie on the Extracellular side of the membrane; sequence ANMYTLNLALMVEAKVTWSKVYFHN. Residues 258 to 278 form a helical membrane-spanning segment; the sequence is LLPTLIGNYIAGALVLACPLF. Residues 279 to 314 are Cytoplasmic-facing; that stretch reads YIYRNSYRDYERTRGDGSNCGLRSLSIEMQNGSNGN.

It belongs to the FNT transporter (TC 1.A.16) family. As to quaternary structure, homopentamer.

Its subcellular location is the cell membrane. The protein localises to the vacuole membrane. The enzyme catalyses (S)-lactate(in) + H(+)(in) = (S)-lactate(out) + H(+)(out). It catalyses the reaction formate(in) + H(+)(in) = formate(out) + H(+)(out). The catalysed reaction is pyruvate(out) + H(+)(out) = pyruvate(in) + H(+)(in). It carries out the reaction acetate(out) + H(+)(out) = acetate(in) + H(+)(in). Its activity is regulated as follows. Inhibited by the Malaria Box compound MMV007839 and its derivatives BH296 and BH267.meta. Functionally, monocarboxylate-proton symporter that mediates the efflux of the waste product lactate in the intraerythrocytic parasites; active in acidic-to-neutral pH range. Transports L-lactate. The sequence is that of Formate-nitrite transporter from Plasmodium knowlesi (strain H).